A 488-amino-acid chain; its full sequence is Glutamyl-tRNA(Gln) amidotransferase subunit A (488 aa).

Catalysis depends on charge relay system residues K77 and S152. S176 (acyl-ester intermediate) is an active-site residue.

It belongs to the amidase family. GatA subfamily. In terms of assembly, heterotrimer of A, B and C subunits.

It carries out the reaction L-glutamyl-tRNA(Gln) + L-glutamine + ATP + H2O = L-glutaminyl-tRNA(Gln) + L-glutamate + ADP + phosphate + H(+). Allows the formation of correctly charged Gln-tRNA(Gln) through the transamidation of misacylated Glu-tRNA(Gln) in organisms which lack glutaminyl-tRNA synthetase. The reaction takes place in the presence of glutamine and ATP through an activated gamma-phospho-Glu-tRNA(Gln). The protein is Glutamyl-tRNA(Gln) amidotransferase subunit A of Streptococcus pyogenes serotype M3 (strain ATCC BAA-595 / MGAS315).